The following is a 598-amino-acid chain: Vacuolin-A (598 aa).

The stretch at 482–539 (IKTTEARLKAETDNIALEQRNKAIISESQAKLSSAQREAESLLITAEAQKKASELQGE) forms a coiled coil.

Belongs to the vacuolin family.

The protein localises to the endosome membrane. It is found in the lysosome. The sequence is that of Vacuolin-A (vacA) from Dictyostelium discoideum (Social amoeba).